We begin with the raw amino-acid sequence, 435 residues long: 3-phosphoshikimate 1-carboxyvinyltransferase (435 aa).

Lys15, Ser16, and Arg20 together coordinate 3-phosphoshikimate. Phosphoenolpyruvate is bound at residue Lys15. Phosphoenolpyruvate-binding residues include Gly96 and Arg124. 3-phosphoshikimate is bound by residues Ser169, Gln171, Ser195, Asp318, and Lys345. Gln171 is a phosphoenolpyruvate binding site. Asp318 (proton acceptor) is an active-site residue. Positions 349 and 393 each coordinate phosphoenolpyruvate.

Belongs to the EPSP synthase family. Monomer.

Its subcellular location is the cytoplasm. The catalysed reaction is 3-phosphoshikimate + phosphoenolpyruvate = 5-O-(1-carboxyvinyl)-3-phosphoshikimate + phosphate. It participates in metabolic intermediate biosynthesis; chorismate biosynthesis; chorismate from D-erythrose 4-phosphate and phosphoenolpyruvate: step 6/7. Catalyzes the transfer of the enolpyruvyl moiety of phosphoenolpyruvate (PEP) to the 5-hydroxyl of shikimate-3-phosphate (S3P) to produce enolpyruvyl shikimate-3-phosphate and inorganic phosphate. The chain is 3-phosphoshikimate 1-carboxyvinyltransferase from Chlorobium chlorochromatii (strain CaD3).